Reading from the N-terminus, the 550-residue chain is Protein UshA (550 aa).

Residues 1–25 (MRFSLSTTAAALAVSLAFAPGWAVA) form the signal peptide. 7 residues coordinate a divalent metal cation: Asp41, His43, Asp84, Asn116, His217, His252, and Gln254. Cys258 and Cys275 form a disulfide bridge. Substrate is bound by residues 375-379 (RSKVR) and 498-504 (FNALGGD).

This sequence belongs to the 5'-nucleotidase family. Co(2+) is required as a cofactor.

It localises to the periplasm. The catalysed reaction is UDP-sugar + H2O = UMP + alpha-D-aldose 1-phosphate.. It catalyses the reaction a ribonucleoside 5'-phosphate + H2O = a ribonucleoside + phosphate. In terms of biological role, degradation of external UDP-glucose to uridine monophosphate and glucose-1-phosphate, which can then be used by the cell. The polypeptide is Protein UshA (ushA) (Yersinia enterocolitica serotype O:8 / biotype 1B (strain NCTC 13174 / 8081)).